The chain runs to 527 residues: Phosphoenolpyruvate carboxykinase (ATP) (527 aa).

Substrate-binding residues include Arg56, Tyr192, and Lys198. Residues Lys198, His217, and 233–241 contribute to the ATP site; that span reads GLSGTGKTT. Mn(2+) is bound by residues Lys198 and His217. A Mn(2+)-binding site is contributed by Asp254. 3 residues coordinate ATP: Glu282, Arg319, and Thr444. Arg319 is a substrate binding site.

This sequence belongs to the phosphoenolpyruvate carboxykinase (ATP) family. It depends on Mn(2+) as a cofactor.

The protein resides in the cytoplasm. The enzyme catalyses oxaloacetate + ATP = phosphoenolpyruvate + ADP + CO2. It functions in the pathway carbohydrate biosynthesis; gluconeogenesis. Its function is as follows. Involved in the gluconeogenesis. Catalyzes the conversion of oxaloacetate (OAA) to phosphoenolpyruvate (PEP) through direct phosphoryl transfer between the nucleoside triphosphate and OAA. In Bacillus velezensis (strain DSM 23117 / BGSC 10A6 / LMG 26770 / FZB42) (Bacillus amyloliquefaciens subsp. plantarum), this protein is Phosphoenolpyruvate carboxykinase (ATP).